The sequence spans 61 residues: UPF0434 protein PSPTO_3844 (61 aa).

It belongs to the UPF0434 family.

This chain is UPF0434 protein PSPTO_3844, found in Pseudomonas syringae pv. tomato (strain ATCC BAA-871 / DC3000).